The sequence spans 368 residues: MFYWLIDLSNTVPGLGIFKPLLNVFRYITFRTGGAVVTGALFVFLFGPWIIDNLRLRQGKGQPIRADGPQSHLVSKKGTPTMGGLMILSGLVVSTVLWANPLNPYVWIVLAVTLGFGLIGFYDDYLKVTKQTHAGFSGRTRLLLELLIALAACYALTRLGREPFSTALVIPFFKDVALDLGWFFLGFGAFIIVGAGNAVNLTDGLDGLAIVPVMIAAASFAMIAYLAGNAVFADYLQINYIAGAGELAVLCGAVLGAGLGFLWFNAPPASIFMGDTGSLALGGMLGSIAVAVKHEIVLAVIGGLFVLEAVSVIVQVASFKLTGKRIFKMAPIHHHFEQLGWTEPQIVIRFWIISVMLALAGLSTLKLR.

The next 10 helical transmembrane spans lie at 32–52 (TGGAVVTGALFVFLFGPWIID), 79–99 (TPTMGGLMILSGLVVSTVLWA), 102–122 (LNPYVWIVLAVTLGFGLIGFY), 142–160 (LLLELLIALAACYALTRLG), 176–196 (VALDLGWFFLGFGAFIIVGAG), 207–227 (GLAIVPVMIAAASFAMIAYLA), 244–264 (AGELAVLCGAVLGAGLGFLWF), 271–291 (IFMGDTGSLALGGMLGSIAVA), 296–316 (IVLAVIGGLFVLEAVSVIVQV), and 345–365 (QIVIRFWIISVMLALAGLSTL).

This sequence belongs to the glycosyltransferase 4 family. MraY subfamily. Mg(2+) serves as cofactor.

The protein resides in the cell inner membrane. It carries out the reaction UDP-N-acetyl-alpha-D-muramoyl-L-alanyl-gamma-D-glutamyl-meso-2,6-diaminopimeloyl-D-alanyl-D-alanine + di-trans,octa-cis-undecaprenyl phosphate = di-trans,octa-cis-undecaprenyl diphospho-N-acetyl-alpha-D-muramoyl-L-alanyl-D-glutamyl-meso-2,6-diaminopimeloyl-D-alanyl-D-alanine + UMP. It functions in the pathway cell wall biogenesis; peptidoglycan biosynthesis. Catalyzes the initial step of the lipid cycle reactions in the biosynthesis of the cell wall peptidoglycan: transfers peptidoglycan precursor phospho-MurNAc-pentapeptide from UDP-MurNAc-pentapeptide onto the lipid carrier undecaprenyl phosphate, yielding undecaprenyl-pyrophosphoryl-MurNAc-pentapeptide, known as lipid I. This Nitrobacter winogradskyi (strain ATCC 25391 / DSM 10237 / CIP 104748 / NCIMB 11846 / Nb-255) protein is Phospho-N-acetylmuramoyl-pentapeptide-transferase.